The primary structure comprises 548 residues: Folylpolyglutamate synthase (548 aa).

G130 to S133 contributes to the ATP binding site. 3 residues coordinate Mg(2+): S157, E234, and H262. The ATP site is built by R382 and D396.

This sequence belongs to the folylpolyglutamate synthase family. Requires a monovalent cation as cofactor.

It localises to the mitochondrion inner membrane. It is found in the mitochondrion matrix. The protein resides in the cytoplasm. The catalysed reaction is (6S)-5,6,7,8-tetrahydrofolyl-(gamma-L-Glu)(n) + L-glutamate + ATP = (6S)-5,6,7,8-tetrahydrofolyl-(gamma-L-Glu)(n+1) + ADP + phosphate + H(+). It participates in cofactor biosynthesis; tetrahydrofolylpolyglutamate biosynthesis. Its function is as follows. Catalyzes conversion of folates to polyglutamate derivatives allowing concentration of folate compounds in the cell and the intracellular retention of these cofactors, which are important substrates for most of the folate-dependent enzymes that are involved in one-carbon transfer reactions involved in purine, pyrimidine and amino acid synthesis. Required for methionine synthesis and maintenance of intact mitochondrial DNA. Involved in telomere maintenance. In Saccharomyces cerevisiae (strain RM11-1a) (Baker's yeast), this protein is Folylpolyglutamate synthase.